The sequence spans 222 residues: Small ribosomal subunit protein uS7m (222 aa).

The protein belongs to the universal ribosomal protein uS7 family. As to quaternary structure, part of the small ribosomal subunit.

It is found in the mitochondrion. Its function is as follows. One of the primary rRNA binding proteins, it binds directly to 18S rRNA where it nucleates assembly of the head domain of the small subunit. This Prototheca wickerhamii protein is Small ribosomal subunit protein uS7m (RPS7).